The sequence spans 290 residues: Sodium/potassium-transporting ATPase subunit beta-2 (290 aa).

At 1-39 (MVIQKEKKSCGQVVEEWKEFVWNPRTHQFMGRTGTSWAF) the chain is on the cytoplasmic side. The helical; Signal-anchor for type II membrane protein transmembrane segment at 40–67 (ILLFYLVFYGFLTAMFTLTMWVMLQTVS) threads the bilayer. At 68 to 290 (EHTPKYQDRL…VAFKLRINKT (223 aa)) the chain is on the extracellular side. N-linked (GlcNAc...) asparagine glycosylation is found at asparagine 96 and asparagine 118. Cysteine 129 and cysteine 150 are oxidised to a cystine. 2 N-linked (GlcNAc...) asparagine glycosylation sites follow: asparagine 153 and asparagine 159. Cysteine 160 and cysteine 177 form a disulfide bridge. 3 N-linked (GlcNAc...) asparagine glycosylation sites follow: asparagine 193, asparagine 197, and asparagine 238. The interval 193–290 (NQSMNVTCAG…VAFKLRINKT (98 aa)) is immunoglobulin-like. Cysteine 200 and cysteine 261 are oxidised to a cystine.

This sequence belongs to the X(+)/potassium ATPases subunit beta family. The sodium/potassium-transporting ATPase is composed of a catalytic alpha subunit, an auxiliary non-catalytic beta subunit and an additional regulatory subunit. Interacts with BSG.

It is found in the cell membrane. In terms of biological role, this is the non-catalytic component of the active enzyme, which catalyzes the hydrolysis of ATP coupled with the exchange of Na(+) and K(+) ions across the plasma membrane. The exact function of the beta-2 subunit is not known. Mediates cell adhesion of neurons and astrocytes, and promotes neurite outgrowth. The chain is Sodium/potassium-transporting ATPase subunit beta-2 (ATP1B2) from Oryctolagus cuniculus (Rabbit).